The chain runs to 96 residues: Large ribosomal subunit protein uL23 (96 aa).

The protein belongs to the universal ribosomal protein uL23 family. Part of the 50S ribosomal subunit. Contacts protein L29, and trigger factor when it is bound to the ribosome.

One of the early assembly proteins it binds 23S rRNA. One of the proteins that surrounds the polypeptide exit tunnel on the outside of the ribosome. Forms the main docking site for trigger factor binding to the ribosome. This chain is Large ribosomal subunit protein uL23, found in Enterococcus faecalis (strain ATCC 700802 / V583).